The following is a 457-amino-acid chain: UDP-N-acetylmuramate--L-alanine ligase (457 aa).

109–115 is an ATP binding site; sequence GTDGKTT.

This sequence belongs to the MurCDEF family.

The protein resides in the cytoplasm. The enzyme catalyses UDP-N-acetyl-alpha-D-muramate + L-alanine + ATP = UDP-N-acetyl-alpha-D-muramoyl-L-alanine + ADP + phosphate + H(+). Its pathway is cell wall biogenesis; peptidoglycan biosynthesis. Its function is as follows. Cell wall formation. This is UDP-N-acetylmuramate--L-alanine ligase from Thermotoga sp. (strain RQ2).